The chain runs to 322 residues: Phosphatidylglycerol--prolipoprotein diacylglyceryl transferase (322 aa).

Transmembrane regions (helical) follow at residues 23-43 (VYPI…AFFW), 53-73 (FFAL…LWFV), and 97-117 (GLSI…YIYF). Arg-143 provides a ligand contact to a 1,2-diacyl-sn-glycero-3-phospho-(1'-sn-glycerol). The next 2 membrane-spanning stretches (helical) occupy residues 191-211 (PLFL…VWII) and 250-270 (LAAM…EIWA).

The protein belongs to the Lgt family.

It localises to the cell membrane. The enzyme catalyses L-cysteinyl-[prolipoprotein] + a 1,2-diacyl-sn-glycero-3-phospho-(1'-sn-glycerol) = an S-1,2-diacyl-sn-glyceryl-L-cysteinyl-[prolipoprotein] + sn-glycerol 1-phosphate + H(+). It participates in protein modification; lipoprotein biosynthesis (diacylglyceryl transfer). Catalyzes the transfer of the diacylglyceryl group from phosphatidylglycerol to the sulfhydryl group of the N-terminal cysteine of a prolipoprotein, the first step in the formation of mature lipoproteins. This chain is Phosphatidylglycerol--prolipoprotein diacylglyceryl transferase, found in Mycoplasmopsis pulmonis (strain UAB CTIP) (Mycoplasma pulmonis).